We begin with the raw amino-acid sequence, 347 residues long: UPF0324 membrane protein Atu0671 (347 aa).

10 helical membrane passes run 15–37, 50–72, 105–127, 140–162, 172–194, 201–223, 233–250, 263–282, 287–309, and 322–344; these read LRWL…AAIL, WLGD…SLPV, AGGL…SYAA, LIAC…AIGA, AFTA…LLGL, IFAG…LGAV, LIRV…SVIH, MVPW…SFGL, LLSP…LGLS, and VIIA…ILLT.

Belongs to the UPF0324 family.

The protein resides in the cell membrane. In Agrobacterium fabrum (strain C58 / ATCC 33970) (Agrobacterium tumefaciens (strain C58)), this protein is UPF0324 membrane protein Atu0671.